We begin with the raw amino-acid sequence, 405 residues long: MFNYEELFQTHKTPFYLYDFDKIKQAFLNYKEAFKGRKSLICYALKANSNLSILSLLAHLESGADCVSIGEIQRALKAGIKPYRIVFSGVGKSAFEIEQALKLNILFLNVESFMELKTIETIAQSLGIKARISIRINPNIDAKTHPYISTGLKENKFGVGEKEALEMFLWAKKSAFLEPVSVHFHIGSQLLDLEPIIEASQKVAKIAKSLIALGIDLRFFDVGGGIGVSYENEETIKLYDYAQGILNALQGLDLTIICEPGRSIVAESGELITQVLYEKKAQNKRFVIVDAGMNDFLRPSLYHAKHAIRVITPSKGREISPCDVVGPVCESSDTFLKDAHLPELEPGDKIAIEKVGAYGSSMASQYNSRPKLLELALEDHKIRVIRKREALEDLWRLEEEGLKGV.

At lysine 46 the chain carries N6-(pyridoxal phosphate)lysine. Pyridoxal 5'-phosphate contacts are provided by residues glycine 225 and 259-262; that span reads EPGR. Arginine 262, arginine 298, and tyrosine 302 together coordinate substrate. Cysteine 329 functions as the Proton donor in the catalytic mechanism. The substrate site is built by glutamate 330 and tyrosine 358. Residue tyrosine 358 coordinates pyridoxal 5'-phosphate.

The protein belongs to the Orn/Lys/Arg decarboxylase class-II family. LysA subfamily. Homodimer. Requires pyridoxal 5'-phosphate as cofactor.

It catalyses the reaction meso-2,6-diaminopimelate + H(+) = L-lysine + CO2. It participates in amino-acid biosynthesis; L-lysine biosynthesis via DAP pathway; L-lysine from DL-2,6-diaminopimelate: step 1/1. Functionally, specifically catalyzes the decarboxylation of meso-diaminopimelate (meso-DAP) to L-lysine. The chain is Diaminopimelate decarboxylase from Helicobacter pylori (Campylobacter pylori).